Reading from the N-terminus, the 337-residue chain is Nucleoid-associated protein HS_0228 (337 aa).

This sequence belongs to the YejK family.

It localises to the cytoplasm. The protein resides in the nucleoid. This chain is Nucleoid-associated protein HS_0228, found in Histophilus somni (strain 129Pt) (Haemophilus somnus).